The following is a 449-amino-acid chain: COP9 signalosome complex subunit 2 (449 aa).

The tract at residues 1–32 (MSDDEDMMYDDDEYFDDDEDQDQNDSESEGVE) is disordered. One can recognise a PCI domain in the interval 251 to 420 (AEKEWEKAHT…QQLELDTAKS (170 aa)).

Belongs to the CSN2 family. As to quaternary structure, component of the CSN complex. The holocomplex is comprised of 8 subunits csn1-8. In the complex, it probably interacts directly with csn1, csn3, csn5, csn6, csn7 and csn8.

It is found in the cytoplasm. The protein resides in the nucleus. Its function is as follows. Essential component of the COP9 signalosome complex (CSN), a complex involved in various cellular and developmental processes. The CSN complex is an essential regulator of the ubiquitin (Ubl) conjugation pathway by mediating the deneddylation of the cullin subunits of E3 ligase complexes, leading to modify the Ubl ligase activity. This Dictyostelium discoideum (Social amoeba) protein is COP9 signalosome complex subunit 2 (csn2).